The following is a 377-amino-acid chain: RING-H2 finger protein ATL22 (377 aa).

The N-terminal stretch at 1–23 (MTSKLLPLLLNLIFLFFFPLLNA) is a signal peptide. The helical transmembrane segment at 244–264 (IMCLSLVGPLTALTFCVGLVM) threads the bilayer. The RING-type; atypical zinc-finger motif lies at 327-369 (CPICLSEYATKETVRCLPECEHCFHTECIDAWLKLHSSCPVCR).

Belongs to the RING-type zinc finger family. ATL subfamily.

It localises to the membrane. It catalyses the reaction S-ubiquitinyl-[E2 ubiquitin-conjugating enzyme]-L-cysteine + [acceptor protein]-L-lysine = [E2 ubiquitin-conjugating enzyme]-L-cysteine + N(6)-ubiquitinyl-[acceptor protein]-L-lysine.. The protein operates within protein modification; protein ubiquitination. This is RING-H2 finger protein ATL22 (ATL22) from Arabidopsis thaliana (Mouse-ear cress).